A 334-amino-acid polypeptide reads, in one-letter code: Protein-methionine-sulfoxide reductase catalytic subunit MsrP (334 aa).

Positions 1–44 (MKKIRPLTEADVTAESAFFMQRRQVLKALGISAAALSLPSTAQA) form a signal peptide, tat-type signal. Residues N88, 91-92 (YE), C146, T181, N233, R238, and 249-251 (GIK) contribute to the Mo-molybdopterin site.

It belongs to the MsrP family. Heterodimer of a catalytic subunit (MsrP) and a heme-binding subunit (MsrQ). The cofactor is Mo-molybdopterin. Post-translationally, predicted to be exported by the Tat system. The position of the signal peptide cleavage has not been experimentally proven.

The protein resides in the periplasm. The catalysed reaction is L-methionyl-[protein] + a quinone + H2O = L-methionyl-(S)-S-oxide-[protein] + a quinol. The enzyme catalyses L-methionyl-[protein] + a quinone + H2O = L-methionyl-(R)-S-oxide-[protein] + a quinol. In terms of biological role, part of the MsrPQ system that repairs oxidized periplasmic proteins containing methionine sulfoxide residues (Met-O), using respiratory chain electrons. Thus protects these proteins from oxidative-stress damage caused by reactive species of oxygen and chlorine generated by the host defense mechanisms. MsrPQ is essential for the maintenance of envelope integrity under bleach stress, rescuing a wide series of structurally unrelated periplasmic proteins from methionine oxidation, including the primary periplasmic chaperone SurA and the lipoprotein Pal. The catalytic subunit MsrP is non-stereospecific, being able to reduce both (R-) and (S-) diastereoisomers of methionine sulfoxide. In Salmonella agona (strain SL483), this protein is Protein-methionine-sulfoxide reductase catalytic subunit MsrP.